The sequence spans 206 residues: Ribosomal RNA small subunit methyltransferase G (206 aa).

Residues G74, L79, 125-126 (VE), and R140 each bind S-adenosyl-L-methionine.

It belongs to the methyltransferase superfamily. RNA methyltransferase RsmG family.

It localises to the cytoplasm. The enzyme catalyses guanosine(527) in 16S rRNA + S-adenosyl-L-methionine = N(7)-methylguanosine(527) in 16S rRNA + S-adenosyl-L-homocysteine. Specifically methylates the N7 position of guanine in position 527 of 16S rRNA. This Shewanella amazonensis (strain ATCC BAA-1098 / SB2B) protein is Ribosomal RNA small subunit methyltransferase G.